A 417-amino-acid chain; its full sequence is MLEQMGIAAKAASWQLALLSSREKNQVLEKIADYLEAQTDDILRANAEDLAEARANGLSEAMLDRLALTPARLSGIANDVRQVCNLADPVGQVIDGGLLDSGLRIERRRVPLGVIGVIYEARPNVTVDVASLCLKTGNAAILRGGKETWRTNAATVKVIQQALQECGLPAAAVQAIDSPDRALVGEMLKMDKYIDMLIPRGGAGLHKLCREQSTIPVITGGIGVCHIFVDETAEIPPALKIIVNAKTQRPSTCNTVETLLVHRNIADTFLPALSKQMAESGVTLHAAPSALPALQNGPAKVEPVKAEQYDDEYLSLDLNVKVVADMDEAIAHIREHGTQHSDAILTRTLRNANRFINEVDSSAVYVNASTRFTDGGQFGLGAEVAVSTQKLHARGPMGLEALTTYKWIGFGDDTIRA.

It belongs to the gamma-glutamyl phosphate reductase family.

It is found in the cytoplasm. It catalyses the reaction L-glutamate 5-semialdehyde + phosphate + NADP(+) = L-glutamyl 5-phosphate + NADPH + H(+). Its pathway is amino-acid biosynthesis; L-proline biosynthesis; L-glutamate 5-semialdehyde from L-glutamate: step 2/2. Its function is as follows. Catalyzes the NADPH-dependent reduction of L-glutamate 5-phosphate into L-glutamate 5-semialdehyde and phosphate. The product spontaneously undergoes cyclization to form 1-pyrroline-5-carboxylate. In Klebsiella pneumoniae subsp. pneumoniae (strain ATCC 700721 / MGH 78578), this protein is Gamma-glutamyl phosphate reductase.